The primary structure comprises 827 residues: Copper-transporting ATPase 2 (827 aa).

2 consecutive HMA domains span residues 15 to 80 (VSTN…YAPR) and 82 to 148 (ATEE…YELR). Residues C26, C29, C93, and C96 each contribute to the Cu cation site. Transmembrane regions (helical) follow at residues 174–194 (VTIS…SHFI), 210–230 (NLYL…LRFF), 246–266 (SLVV…TFVP), 271–291 (SGTA…VLLG), 430–450 (GWFV…WYTF), and 458–478 (FALV…MGLA). D515 serves as the catalytic 4-aspartylphosphate intermediate. Mg(2+)-binding residues include D714 and D718. 2 helical membrane passes run 771–793 (NLFW…LYPV) and 797–819 (LLSP…GNAL).

The protein belongs to the cation transport ATPase (P-type) (TC 3.A.3) family. Type IB subfamily.

It localises to the cell membrane. The enzyme catalyses Cu(2+)(in) + ATP + H2O = Cu(2+)(out) + ADP + phosphate + H(+). Functionally, involved in copper transport. The protein is Copper-transporting ATPase 2 (actP2) of Rhizobium meliloti (strain 1021) (Ensifer meliloti).